A 382-amino-acid chain; its full sequence is Acetylornithine deacetylase (382 aa).

Histidine 79 is a Zn(2+) binding site. Aspartate 81 is an active-site residue. Residue aspartate 111 participates in Zn(2+) binding. The active site involves glutamate 143. Residues glutamate 144, glutamate 168, and histidine 354 each contribute to the Zn(2+) site.

This sequence belongs to the peptidase M20A family. ArgE subfamily. As to quaternary structure, homodimer. Requires Zn(2+) as cofactor. The cofactor is Co(2+). Glutathione is required as a cofactor.

It is found in the cytoplasm. The enzyme catalyses N(2)-acetyl-L-ornithine + H2O = L-ornithine + acetate. It functions in the pathway amino-acid biosynthesis; L-arginine biosynthesis; L-ornithine from N(2)-acetyl-L-ornithine (linear): step 1/1. Catalyzes the hydrolysis of the amide bond of N(2)-acetylated L-amino acids. Cleaves the acetyl group from N-acetyl-L-ornithine to form L-ornithine, an intermediate in L-arginine biosynthesis pathway, and a branchpoint in the synthesis of polyamines. The protein is Acetylornithine deacetylase of Pasteurella multocida (strain Pm70).